The sequence spans 171 residues: Adenine phosphoribosyltransferase (171 aa).

The protein belongs to the purine/pyrimidine phosphoribosyltransferase family. Homodimer.

Its subcellular location is the cytoplasm. It catalyses the reaction AMP + diphosphate = 5-phospho-alpha-D-ribose 1-diphosphate + adenine. It functions in the pathway purine metabolism; AMP biosynthesis via salvage pathway; AMP from adenine: step 1/1. Catalyzes a salvage reaction resulting in the formation of AMP, that is energically less costly than de novo synthesis. This Gloeobacter violaceus (strain ATCC 29082 / PCC 7421) protein is Adenine phosphoribosyltransferase.